A 162-amino-acid chain; its full sequence is Ribonuclease (162 aa).

A signal peptide spans 1-29 (MKKISSVFTMFALIAAILFSGFIPQQAYA). Positions 30 to 53 (ETTLTPTATNKTASIQLTSDVHTL) are excised as a propeptide. Glutamate 125 (proton acceptor) is an active-site residue. The Proton donor role is filled by histidine 154.

It belongs to the ribonuclease N1/T1 family.

It localises to the secreted. In terms of biological role, this is a purine-specific ribonuclease. This is Ribonuclease from Bacillus pumilus (Bacillus mesentericus).